The chain runs to 166 residues: Large ribosomal subunit protein bL17 (166 aa).

The disordered stretch occupies residues 122-166 (PESAPVKAKQDRSKRVRGSKKTQEGSEKAEVSASAGEAAAVTEEK). The segment covering 142–151 (KTQEGSEKAE) has biased composition (basic and acidic residues). Residues 152–166 (VSASAGEAAAVTEEK) are compositionally biased toward low complexity.

It belongs to the bacterial ribosomal protein bL17 family. In terms of assembly, part of the 50S ribosomal subunit. Contacts protein L32.

In Chlorobium phaeobacteroides (strain BS1), this protein is Large ribosomal subunit protein bL17.